The following is a 439-amino-acid chain: tRNA modification GTPase MnmE (439 aa).

(6S)-5-formyl-5,6,7,8-tetrahydrofolate contacts are provided by arginine 20, glutamate 78, and lysine 116. Residues 211–364 enclose the TrmE-type G domain; the sequence is GIYVAILGEP…LLSAIQKKVE (154 aa). Residues 221–226, 240–246, and 265–268 contribute to the GTP site; these read NSGKST, SEYAGTT, and DTAG. Mg(2+) is bound by residues serine 225 and threonine 246. Lysine 439 provides a ligand contact to (6S)-5-formyl-5,6,7,8-tetrahydrofolate.

It belongs to the TRAFAC class TrmE-Era-EngA-EngB-Septin-like GTPase superfamily. TrmE GTPase family. Homodimer. Heterotetramer of two MnmE and two MnmG subunits. It depends on K(+) as a cofactor.

Its subcellular location is the cytoplasm. Its function is as follows. Exhibits a very high intrinsic GTPase hydrolysis rate. Involved in the addition of a carboxymethylaminomethyl (cmnm) group at the wobble position (U34) of certain tRNAs, forming tRNA-cmnm(5)s(2)U34. The chain is tRNA modification GTPase MnmE from Ehrlichia ruminantium (strain Welgevonden).